We begin with the raw amino-acid sequence, 132 residues long: Large ribosomal subunit protein bL12 (132 aa).

This sequence belongs to the bacterial ribosomal protein bL12 family. In terms of assembly, homodimer. Part of the ribosomal stalk of the 50S ribosomal subunit. Forms a multimeric L10(L12)X complex, where L10 forms an elongated spine to which 2 to 4 L12 dimers bind in a sequential fashion. Binds GTP-bound translation factors.

In terms of biological role, forms part of the ribosomal stalk which helps the ribosome interact with GTP-bound translation factors. Is thus essential for accurate translation. The protein is Large ribosomal subunit protein bL12 of Prochlorococcus marinus (strain MIT 9211).